Here is a 159-residue protein sequence, read N- to C-terminus: Endoribonuclease YbeY (159 aa).

Zn(2+) contacts are provided by H125, H129, and H135.

This sequence belongs to the endoribonuclease YbeY family. The cofactor is Zn(2+).

It is found in the cytoplasm. Single strand-specific metallo-endoribonuclease involved in late-stage 70S ribosome quality control and in maturation of the 3' terminus of the 16S rRNA. The chain is Endoribonuclease YbeY from Enterococcus faecalis (strain ATCC 700802 / V583).